The following is an 867-amino-acid chain: Armadillo repeat-containing protein 2 (867 aa).

2 disordered regions span residues 1 to 115 (MLSP…CFSF) and 214 to 252 (TSLP…AVPK). Polar residues-rich tracts occupy residues 18 to 28 (PSVSKQKTSAE), 40 to 50 (VRTQRPFTPQE), and 60 to 69 (SSRTSENRPP). Low complexity-rich tracts occupy residues 70–81 (SSFSLHASSFES) and 234–243 (SSCPSSSDLS). ARM repeat units follow at residues 262-301 (IEVD…HALE), 304-344 (NMLG…ALKV), 363-403 (EKND…SIKF), 408-449 (LGFL…HLLV), 462-503 (SLVR…KLTS), 506-547 (DCCT…NLTA), 551-589 (QARE…QRGE), 591-616 (HRAQ…NIAI), 619-662 (GVGP…NLSY), 664-705 (QVKN…NLSQ), 707-746 (HDVC…NLTV), and 748-790 (KDKR…NFSE).

As to expression, expressed at higher level in testis.

Its function is as follows. Required for sperm flagellum axoneme organization and function. Involved in axonemal central pair complex assembly and/or stability. The chain is Armadillo repeat-containing protein 2 from Homo sapiens (Human).